The following is a 180-amino-acid chain: uncharacterized protein (180 aa).

This is an uncharacterized protein from Haemophilus influenzae (strain ATCC 51907 / DSM 11121 / KW20 / Rd).